Consider the following 428-residue polypeptide: Dihydroorotase (428 aa).

Zn(2+) is bound by residues His-59 and His-61. Substrate-binding positions include His-61 to Arg-63 and Asn-93. Positions 151, 178, and 231 each coordinate Zn(2+). Asn-277 provides a ligand contact to substrate. Asp-304 contacts Zn(2+). The active site involves Asp-304. Residues His-308 and Phe-322–Gly-323 contribute to the substrate site.

Belongs to the metallo-dependent hydrolases superfamily. DHOase family. Class I DHOase subfamily. It depends on Zn(2+) as a cofactor.

It carries out the reaction (S)-dihydroorotate + H2O = N-carbamoyl-L-aspartate + H(+). The protein operates within pyrimidine metabolism; UMP biosynthesis via de novo pathway; (S)-dihydroorotate from bicarbonate: step 3/3. In terms of biological role, catalyzes the reversible cyclization of carbamoyl aspartate to dihydroorotate. This chain is Dihydroorotase, found in Bacillus cereus (strain G9842).